The following is a 369-amino-acid chain: MRN complex-interacting protein (369 aa).

A Phosphoserine modification is found at Ser-115. 3 disordered regions span residues 122–150 (GGGV…PRKR), 209–245 (PSFT…PCPA), and 282–317 (AQAE…TPMP). The Nuclear localization signal (NLS) motif lies at 148 to 151 (RKRK). The span at 221–230 (KGRESSREDL) shows a compositional bias: basic and acidic residues. The interval 223–259 (RESSREDLDTMELVPRGEPPCPAQQVRTMSKWEQCLG) is necessary for the association with the MRN complex.

Belongs to the MRNIP family. Associates with the MRE11-RAD50-NBN (MRN) damage-sensing complex; this association is constitutive. Interacts with MRE11. Interacts with NBN. Interacts with RAD50. Phosphorylated; phosphorylation is constitutive and occurs in the absence of any DNA-damaging stimulus. Phosphorylation on Ser-115 is necessary for its nuclear retention.

It localises to the nucleus. Its subcellular location is the nucleoplasm. Functionally, plays a role in the cellular response to DNA damage and the maintenance of genome stability through its association with the MRN damage-sensing complex. Promotes chromatin loading and activity of the MRN complex to facilitate subsequent ATM-mediated DNA damage response signaling and DNA repair. The polypeptide is MRN complex-interacting protein (Bos taurus (Bovine)).